Reading from the N-terminus, the 152-residue chain is Transcriptional repressor NrdR (152 aa).

A zinc finger lies at 3–34 (CCYCGHGESKVLETRSAEEGRVIRRRRECMEC). The region spanning 49–139 (LIVRKKGGSL…VYRQFTDVGR (91 aa)) is the ATP-cone domain.

It belongs to the NrdR family. It depends on Zn(2+) as a cofactor.

Functionally, negatively regulates transcription of bacterial ribonucleotide reductase nrd genes and operons by binding to NrdR-boxes. The sequence is that of Transcriptional repressor NrdR from Heliobacterium modesticaldum (strain ATCC 51547 / Ice1).